The following is a 29-amino-acid chain: Dermaseptin-J9 (29 aa).

As to expression, expressed by the skin glands.

The protein resides in the secreted. Functionally, has antimicrobial activity. In Phasmahyla jandaia (Jandaia leaf frog), this protein is Dermaseptin-J9.